The primary structure comprises 253 residues: Ribonuclease HII (253 aa).

In terms of domain architecture, RNase H type-2 spans 70–253 (DLIAGVDEVG…KTFAPIKDIL (184 aa)). Asp-76, Glu-77, and Asp-168 together coordinate a divalent metal cation.

Belongs to the RNase HII family. Mn(2+) is required as a cofactor. It depends on Mg(2+) as a cofactor.

The protein resides in the cytoplasm. It catalyses the reaction Endonucleolytic cleavage to 5'-phosphomonoester.. Its function is as follows. Endonuclease that specifically degrades the RNA of RNA-DNA hybrids. The polypeptide is Ribonuclease HII (Leuconostoc mesenteroides subsp. mesenteroides (strain ATCC 8293 / DSM 20343 / BCRC 11652 / CCM 1803 / JCM 6124 / NCDO 523 / NBRC 100496 / NCIMB 8023 / NCTC 12954 / NRRL B-1118 / 37Y)).